We begin with the raw amino-acid sequence, 337 residues long: Glyceraldehyde-3-phosphate dehydrogenase 2 (337 aa).

NADP(+)-binding positions include 11 to 12 (RI), D35, R80, and T122. D-glyceraldehyde 3-phosphate is bound by residues 153–155 (SCT), T184, R199, 212–213 (TG), and R235. C154 acts as the Nucleophile in catalysis. N317 is an NADP(+) binding site.

As to quaternary structure, homotetramer.

The protein localises to the cytoplasm. It carries out the reaction D-glyceraldehyde 3-phosphate + phosphate + NADP(+) = (2R)-3-phospho-glyceroyl phosphate + NADPH + H(+). The enzyme catalyses D-glyceraldehyde 3-phosphate + phosphate + NAD(+) = (2R)-3-phospho-glyceroyl phosphate + NADH + H(+). Its pathway is carbohydrate biosynthesis; Calvin cycle. Its function is as follows. Gap2 has a major role in carbon fixation as a component of the Calvin cycle. Catalyzes the oxidative phosphorylation of glyceraldehyde 3-phosphate (G3P) to 1,3-bisphosphoglycerate (BPG) using the cofactor NADP. The first reaction step involves the formation of a hemiacetal intermediate between G3P and a cysteine residue, and this hemiacetal intermediate is then oxidized to a thioester, with concomitant reduction of NADP to NADPH. The reduced NADPH is then exchanged with the second NAD, and the thioester is attacked by a nucleophilic inorganic phosphate to produce BPG. This is Glyceraldehyde-3-phosphate dehydrogenase 2 (gap2) from Nostoc sp. (strain PCC 7120 / SAG 25.82 / UTEX 2576).